The following is a 99-amino-acid chain: Protein RnfH (99 aa).

The protein belongs to the UPF0125 (RnfH) family.

The protein is Protein RnfH of Buchnera aphidicola subsp. Acyrthosiphon pisum (strain 5A).